Here is a 244-residue protein sequence, read N- to C-terminus: THO complex subunit 4A (244 aa).

The segment at 1–82 (MSTGLDMSLD…EDHRSGRSSA (82 aa)) is disordered. N-acetylserine is present on serine 2. Gly residues predominate over residues 21–35 (GGAGPARGTGSGSGP). A compositionally biased stretch (basic and acidic residues) spans 67–77 (MFSDRSEDHRS). An RRM domain is found at 88–165 (TKLYISNLDY…KPMKIEIVGT (78 aa)). The tract at residues 169-244 (TAAAPSGRPA…KYHSGDMETN (76 aa)) is disordered. Positions 187 to 211 (WRGGQGRGGQQRGGGRGGGGRGGGG) are enriched in gly residues. Positions 220–244 (PAEKISAEDLDADLDKYHSGDMETN) are enriched in basic and acidic residues.

Belongs to the ALYREF family.

The protein localises to the nucleus. It is found in the nucleoplasm. The protein resides in the nucleolus. Functionally, export adapter involved in nuclear export of spliced and unspliced mRNA. In Arabidopsis thaliana (Mouse-ear cress), this protein is THO complex subunit 4A (ALY1).